Consider the following 456-residue polypeptide: MELSALTAVSPVDGRYGSKTIALRSIFSEFGLLKYRTIVEIRWLQKLAATAEIAEVPAFSAEANQFLDAIAANFNEADALRIKEIERTTNHDVKAVEYFLKEKVAAMPELHAVNEFIHFACTSEDINNTSHALMLKEARDTVILPEIRNVIDAIRKLAEEYRDIPLLSRTHGQPASPSTMGKEMANVAYRMERQYKQIANVEILAKINGAVGNYNAHLSAYPTVDWHKFSEEFITESLGVDWNPYTTQIEPHDYIAELFEAVARFNTILIDFDRDVWGYIALGHFKQRTIAGEIGSSTMPHKVNPIDFENSEGNLGLANAVFTHLAQKLPISRWQRDLTDSTVLRNLGVGVGYAIIAYTSTLKGISKLEVNRDALLAELDHNWEVLAEPIQTVMRRYGIEKPYEKLKELTRGKRVDGEAMRQFIDGLALPAEEKTRLKAMTPASYIGYAIELTDKL.

Residues R15 to Y16, N90 to D92, and T122 to S123 contribute to the N(6)-(1,2-dicarboxyethyl)-AMP site. H171 functions as the Proton donor/acceptor in the catalytic mechanism. Q248 lines the N(6)-(1,2-dicarboxyethyl)-AMP pocket. The active-site Proton donor/acceptor is S296. N(6)-(1,2-dicarboxyethyl)-AMP-binding positions include S297, K302 to N304, N310, R336, and S341 to R345.

Belongs to the lyase 1 family. Adenylosuccinate lyase subfamily. Homotetramer.

The catalysed reaction is N(6)-(1,2-dicarboxyethyl)-AMP = fumarate + AMP. The enzyme catalyses (2S)-2-[5-amino-1-(5-phospho-beta-D-ribosyl)imidazole-4-carboxamido]succinate = 5-amino-1-(5-phospho-beta-D-ribosyl)imidazole-4-carboxamide + fumarate. It carries out the reaction (2S)-2-amino-2'-deoxyadenylo-succinate = dZMP + fumarate. It participates in purine metabolism; AMP biosynthesis via de novo pathway; AMP from IMP: step 2/2. It functions in the pathway purine metabolism; IMP biosynthesis via de novo pathway; 5-amino-1-(5-phospho-D-ribosyl)imidazole-4-carboxamide from 5-amino-1-(5-phospho-D-ribosyl)imidazole-4-carboxylate: step 2/2. The protein operates within purine metabolism. Functionally, catalyzes two reactions in de novo purine nucleotide biosynthesis. Catalyzes the breakdown of 5-aminoimidazole- (N-succinylocarboxamide) ribotide (SAICAR or 2-[5-amino-1-(5-phospho-beta-D-ribosyl)imidazole-4-carboxamido]succinate) to 5-aminoimidazole-4-carboxamide ribotide (AICAR or 5-amino-1-(5-phospho-beta-D-ribosyl)imidazole-4-carboxamide) and fumarate, and of adenylosuccinate (ADS or N(6)-(1,2-dicarboxyethyl)-AMP) to adenosine monophosphate (AMP) and fumarate. (Microbial infection) Catalyzes the conversion of 2-amino-2'-deoxyadenylo-succinate to dZMP and fumarate, when the bacterium is infected by a phage that produces the substrate of this reaction, a step in the synthesis of dZTP (2-amino-2'-deoxyadenosine 5'-triphosphate), which is a nucleotide then used by the phage as a DNA polymerase substrate. This Vibrio cholerae serotype O1 (strain ATCC 39541 / Classical Ogawa 395 / O395) protein is Adenylosuccinate lyase.